Reading from the N-terminus, the 328-residue chain is COP9 signalosome complex subunit 6 (328 aa).

Positions valine 42 to isoleucine 175 constitute an MPN domain.

Belongs to the peptidase M67A family. CSN6 subfamily. Component of the CSN complex, composed of COPS1/GPS1, COPS2, COPS3, COPS4, COPS5, COPS6, COPS7 (COPS7A or COPS7B), COPS8 and COPS9. In the complex, it probably interacts directly with COPS2, COPS4, COPS5, COPS7 (COPS7A or COPS7B) and COPS9. Interacts with the translation initiation factor EIF3S6. Interacts weakly with RBX1. Directly interacts with COP1 and 14-3-3 protein sigma/SFN. Interacts with ERCC6.

The protein resides in the cytoplasm. It localises to the nucleus. Functionally, component of the COP9 signalosome complex (CSN), a complex involved in various cellular and developmental processes. The CSN complex is an essential regulator of the ubiquitin (Ubl) conjugation pathway by mediating the deneddylation of the cullin subunits of SCF-type E3 ligase complexes, leading to decrease the Ubl ligase activity of SCF-type complexes such as SCF, CSA or DDB2. The complex is also involved in phosphorylation of p53/TP53, c-jun/JUN, IkappaBalpha/NFKBIA, ITPK1 and IRF8, possibly via its association with CK2 and PKD kinases. CSN-dependent phosphorylation of TP53 and JUN promotes and protects degradation by the Ubl system, respectively. Has some glucocorticoid receptor-responsive activity. Stabilizes COP1 through reducing COP1 auto-ubiquitination and decelerating COP1 turnover rate, hence regulates the ubiquitination of COP1 targets, including SFN. The protein is COP9 signalosome complex subunit 6 (COPS6) of Pongo abelii (Sumatran orangutan).